The primary structure comprises 1190 residues: DNA-directed RNA polymerase subunit beta (1190 aa).

This sequence belongs to the RNA polymerase beta chain family. The RNAP catalytic core consists of 2 alpha, 1 beta, 1 beta' and 1 omega subunit. When a sigma factor is associated with the core the holoenzyme is formed, which can initiate transcription.

It carries out the reaction RNA(n) + a ribonucleoside 5'-triphosphate = RNA(n+1) + diphosphate. Its function is as follows. DNA-dependent RNA polymerase catalyzes the transcription of DNA into RNA using the four ribonucleoside triphosphates as substrates. This chain is DNA-directed RNA polymerase subunit beta, found in Geobacillus thermodenitrificans (strain NG80-2).